A 117-amino-acid polypeptide reads, in one-letter code: Immunoglobulin heavy variable 1-3 (117 aa).

An N-terminal signal peptide occupies residues 1-19; sequence MDWTWRILFLVAAATGAHS. The tract at residues 20–44 is framework-1; sequence QVQLVQSGAEVKKPGASVKVSCKAS. The 98-residue stretch at 20-117 folds into the Ig-like domain; that stretch reads QVQLVQSGAE…EDTAVYYCAR (98 aa). An intrachain disulfide couples Cys41 to Cys115. Positions 45–52 are complementarity-determining-1; it reads GYTFTSYA. Residues 53–69 are framework-2; it reads MHWVRQAPGQRLEWMGW. The segment at 70–77 is complementarity-determining-2; it reads INAGNGNT. Residues 78 to 115 form a framework-3 region; that stretch reads KYSQKFQGRVTITRDTSASTAYMELSSLRSEDTAVYYC. A complementarity-determining-3 region spans residues 116 to 117; that stretch reads AR.

As to quaternary structure, immunoglobulins are composed of two identical heavy chains and two identical light chains; disulfide-linked.

The protein localises to the secreted. Its subcellular location is the cell membrane. Functionally, v region of the variable domain of immunoglobulin heavy chains that participates in the antigen recognition. Immunoglobulins, also known as antibodies, are membrane-bound or secreted glycoproteins produced by B lymphocytes. In the recognition phase of humoral immunity, the membrane-bound immunoglobulins serve as receptors which, upon binding of a specific antigen, trigger the clonal expansion and differentiation of B lymphocytes into immunoglobulins-secreting plasma cells. Secreted immunoglobulins mediate the effector phase of humoral immunity, which results in the elimination of bound antigens. The antigen binding site is formed by the variable domain of one heavy chain, together with that of its associated light chain. Thus, each immunoglobulin has two antigen binding sites with remarkable affinity for a particular antigen. The variable domains are assembled by a process called V-(D)-J rearrangement and can then be subjected to somatic hypermutations which, after exposure to antigen and selection, allow affinity maturation for a particular antigen. The sequence is that of Immunoglobulin heavy variable 1-3 from Homo sapiens (Human).